Consider the following 503-residue polypeptide: 2,3-bisphosphoglycerate-independent phosphoglycerate mutase (503 aa).

Residues Asp-10 and Ser-60 each coordinate Mn(2+). The active-site Phosphoserine intermediate is Ser-60. Residues His-121, 150 to 151 (RD), Arg-181, Arg-187, 256 to 259 (RPDR), and Lys-330 contribute to the substrate site. The Mn(2+) site is built by Asp-396, His-400, Asp-437, His-438, and His-455.

Belongs to the BPG-independent phosphoglycerate mutase family. As to quaternary structure, monomer. The cofactor is Mn(2+).

The enzyme catalyses (2R)-2-phosphoglycerate = (2R)-3-phosphoglycerate. It functions in the pathway carbohydrate degradation; glycolysis; pyruvate from D-glyceraldehyde 3-phosphate: step 3/5. Catalyzes the interconversion of 2-phosphoglycerate and 3-phosphoglycerate. In Mycoplasmoides gallisepticum (strain R(low / passage 15 / clone 2)) (Mycoplasma gallisepticum), this protein is 2,3-bisphosphoglycerate-independent phosphoglycerate mutase.